A 430-amino-acid chain; its full sequence is Transcription factor PIF4 (430 aa).

Disordered regions lie at residues 42–71 (QTHR…DQET), 97–136 (MDPL…VMPP), 160–183 (TVGP…SHDR), 223–266 (DRKR…NLSE), and 405–430 (SSPA…RLDH). Over residues 43-60 (THREQTQTQKQDHHEEAL) the composition is skewed to basic and acidic residues. Positions 61–71 (RSSTFLEDQET) are enriched in polar residues. Positions 126 to 136 (CPDPPPQVMPP) are enriched in pro residues. Over residues 160-175 (TVGPSHCGSNPSQNDL) the composition is skewed to polar residues. The segment covering 244–253 (NKSNQRSGSN) has biased composition (low complexity). A compositionally biased stretch (basic and acidic residues) spans 257–266 (RAAEVHNLSE). Positions 257–306 (RAAEVHNLSERRRRDRINERMKALQELIPHCSKTDKASILDEAIDYLKSL) constitute a bHLH domain. Positions 405-419 (SSPAGQQSQQPSSVP) are enriched in low complexity.

Belongs to the bHLH protein family. Interacts preferentially with the Pfr form of phytochrome B (phyB). Binds DNA as a homodimer, but once bound to DNA, loses its capacity to interact with phyB. Interacts with APRR1/TOC1 and PIF3. Binds to RGL2 and RGA. Forms non-functional heterodimer with HFR1. Interacts with PHYB, CRY1 and CRY2 in the nucleus in response to low blue light (LBL). Interacts with FYPP1 and FYPP3. Associates to PTAC12/HMR/PAP5, which acts as a transcriptional coactivator to trigger the thermoresponsive growth-relevant genes and promote warm-temperature-dependent PIF4 accumulation. Interacts with MED14. In terms of tissue distribution, mainly expressed in leaves, stems and seedlings, and, to a lower extent, in fruits, flowers and roots.

It localises to the nucleus. Its function is as follows. Transcription factor acting negatively in the phytochrome B signaling pathway. May regulate the expression of a subset of genes involved in cell expansion by binding to the G-box motif. Activated by CRY1 and CRY2 in response to low blue light (LBL) by direct binding at chromatin on E-box variant 5'-CA[CT]GTG-3' to stimulate specific gene expression to adapt global physiology (e.g. hypocotyl elongation in low blue light). Element of a PIF4/HMR/MED14-dependent thermoresponsive process; collaboratively with its transcriptional coactivator PTAC12/HMR/PAP5, involved in the regulation of thermoresponsive growth-relevant genes (e.g. mainly involved in biosynthesis and signaling of the phytohormone auxin) leading to daytime warm temperature elicitation of MED14-dependent thermomorphogenesis (e.g. hypocotyl elongation). The protein is Transcription factor PIF4 of Arabidopsis thaliana (Mouse-ear cress).